The following is a 294-amino-acid chain: tRNA dimethylallyltransferase (294 aa).

ATP is bound at residue 10-17 (GPTAVGKT). Residue 12–17 (TAVGKT) participates in substrate binding. Positions 35–38 (DSQQ) are interaction with substrate tRNA.

This sequence belongs to the IPP transferase family. In terms of assembly, monomer. It depends on Mg(2+) as a cofactor.

The catalysed reaction is adenosine(37) in tRNA + dimethylallyl diphosphate = N(6)-dimethylallyladenosine(37) in tRNA + diphosphate. Its function is as follows. Catalyzes the transfer of a dimethylallyl group onto the adenine at position 37 in tRNAs that read codons beginning with uridine, leading to the formation of N6-(dimethylallyl)adenosine (i(6)A). In Streptococcus pneumoniae (strain Taiwan19F-14), this protein is tRNA dimethylallyltransferase.